The chain runs to 384 residues: Dual-specificity RNA methyltransferase RlmN (384 aa).

Glu-105 serves as the catalytic Proton acceptor. The region spanning 111–350 is the Radical SAM core domain; it reads EDDRATLCVS…TIVRKTRGDD (240 aa). Cys-118 and Cys-355 form a disulfide bridge. [4Fe-4S] cluster-binding residues include Cys-125, Cys-129, and Cys-132. Residues 179-180, Ser-211, 233-235, and Asn-312 contribute to the S-adenosyl-L-methionine site; these read GE and SLH. The active-site S-methylcysteine intermediate is Cys-355.

It belongs to the radical SAM superfamily. RlmN family. The cofactor is [4Fe-4S] cluster.

It localises to the cytoplasm. The enzyme catalyses adenosine(2503) in 23S rRNA + 2 reduced [2Fe-2S]-[ferredoxin] + 2 S-adenosyl-L-methionine = 2-methyladenosine(2503) in 23S rRNA + 5'-deoxyadenosine + L-methionine + 2 oxidized [2Fe-2S]-[ferredoxin] + S-adenosyl-L-homocysteine. The catalysed reaction is adenosine(37) in tRNA + 2 reduced [2Fe-2S]-[ferredoxin] + 2 S-adenosyl-L-methionine = 2-methyladenosine(37) in tRNA + 5'-deoxyadenosine + L-methionine + 2 oxidized [2Fe-2S]-[ferredoxin] + S-adenosyl-L-homocysteine. In terms of biological role, specifically methylates position 2 of adenine 2503 in 23S rRNA and position 2 of adenine 37 in tRNAs. m2A2503 modification seems to play a crucial role in the proofreading step occurring at the peptidyl transferase center and thus would serve to optimize ribosomal fidelity. The chain is Dual-specificity RNA methyltransferase RlmN from Shigella boydii serotype 18 (strain CDC 3083-94 / BS512).